The following is a 683-amino-acid chain: Synaptic vesicle glycoprotein 2B (683 aa).

Positions 1-10 are enriched in basic and acidic residues; that stretch reads MDDYRYRDNY. The segment at 1-72 is disordered; sequence MDDYRYRDNY…QTKMAPSRAD (72 aa). Residues 1 to 110 lie on the Cytoplasmic side of the membrane; it reads MDDYRYRDNY…ECGHGRFQWT (110 aa). A Phosphoserine modification is found at Ser-33. Residue Thr-36 is modified to Phosphothreonine. Residues 111-131 traverse the membrane as a helical segment; that stretch reads LFFVLVLALMADGVEVFVVSF. Residues 132 to 148 lie on the Extracellular side of the membrane; that stretch reads ALPSAEKDMCLSSSKKG. Residues 149–169 form a helical membrane-spanning segment; sequence MLGLIVYLGMMAGAFILGGLA. Over 170 to 182 the chain is Cytoplasmic; it reads DKLGRKKVLSMSL. The helical transmembrane segment at 183-203 threads the bilayer; the sequence is AINASFASLSSFVQGYGAFLF. Over 204 to 205 the chain is Extracellular; sequence CR. A helical transmembrane segment spans residues 206–226; that stretch reads LISGIGIGGSLPIVFAYFSEF. The Cytoplasmic portion of the chain corresponds to 227-237; sequence LSREKRGEHLS. The helical transmembrane segment at 238-258 threads the bilayer; it reads WLGIFWMTGGIYASAMAWSII. Residues 259–277 lie on the Extracellular side of the membrane; it reads PHYGWGFSMGTNYHFHSWR. Residues 278–298 traverse the membrane as a helical segment; the sequence is VFVIVCALPATVSMVALKFMP. Residues 299–390 lie on the Cytoplasmic side of the membrane; sequence ESPRFLLEMG…CVMGPYRMNT (92 aa). The chain crosses the membrane as a helical span at residues 391–411; that stretch reads LILAVVWFTMALSYYGLTVWF. The Extracellular portion of the chain corresponds to 412–535; sequence PDMIRYFQDE…CHMDFEEDND (124 aa). Tyr-423 carries the post-translational modification Phosphotyrosine. 3 N-linked (GlcNAc...) asparagine glycosylation sites follow: Asn-441, Asn-491, and Asn-516. Residues 536 to 556 traverse the membrane as a helical segment; the sequence is FLIYLVSFLGSLSVLPGNIIS. Residues 557 to 565 are Cytoplasmic-facing; the sequence is ALLMDRIGR. Residues 566-586 traverse the membrane as a helical segment; the sequence is LKMIGGSMLISAVCCFFLFFG. The Extracellular portion of the chain corresponds to 587 to 592; sequence NSESAM. The helical transmembrane segment at 593 to 613 threads the bilayer; that stretch reads IGWQCLFCGTSIAAWNALDVI. At 614–626 the chain is on the cytoplasmic side; the sequence is TVELYPTNQRATA. The chain crosses the membrane as a helical span at residues 627 to 649; sequence FGILNGLCKLGAILGNTIFASFV. The Extracellular segment spans residues 650–653; the sequence is GITK. A helical transmembrane segment spans residues 654-672; it reads VVPILLAAASLVGGGLVAL. Residues 673–683 are Cytoplasmic-facing; the sequence is RLPETREQVLM.

It belongs to the major facilitator superfamily. As to quaternary structure, interacts with SYT1 in a calcium-independent manner. Forms a complex with SYT1, syntaxin-1 and SNAP25. In terms of assembly, (Microbial infection) Interacts with C.botulinum neurotoxin type A1 and type A2 (BoNT/A, botA). Interaction is improved by glycosylation of SV2. (Microbial infection) Interacts with C.botulinum neurotoxin type D (BoNT/D, botD). As to quaternary structure, (Microbial infection) Interacts with C.botulinum neurotoxin type E (BoNT/E). Interaction requires glycosylation of SV2 proteins. In terms of assembly, (Microbial infection) Interacts with C.botulinum neurotoxin type F (BoNT/F). Interaction requires glycosylation of SV2 proteins. N-glycosylated. In terms of processing, the N-terminal cytoplasmic domain is phosphorylated by CK1. Widely expressed throughout the brain. Specifically expressed by pinealocytes in the pineal gland. Also detected in testis (at protein level). Specifically expressed in neural tissues. Expressed in the spinal cord and in all brain regions with a stronger expression in hippocampus and cortex.

The protein localises to the cytoplasmic vesicle. The protein resides in the secretory vesicle. It localises to the synaptic vesicle membrane. It is found in the acrosome. In terms of biological role, probably plays a role in the control of regulated secretion in neural and endocrine cells. Its function is as follows. (Microbial infection) Receptor for C.botulinum neurotoxin type A (BoNT/A, botA); the toxin binds via extracellular loop 4. Restores uptake of BoNT/A in mouse and rat cells that are deleted for SV2 receptor. Glycosylation of SV2B is not essential for receptor activity, but enhances the interaction. Also serves as a receptor for the closely related C.botulinum neurotoxin type A2; glycosylation is not essential but enhances the interaction. (Microbial infection) Possible receptor for C.botulinum neurotoxin type D (BoNT/D, botD); BoNT/D does not bind to extracellular loop 4 as do BoNT/A and BoNT/E. Another group does not find a convincing interaction with SV2. Functionally, (Microbial infection) Receptor for C.botulinum neurotoxin type E (BoNT/E); the toxin probably binds via extracellular loop 4. Restores uptake of BoNT/E in mouse cells that are deleted for SV2 receptor. Glycosylation of SV2B is not essential for receptor activity, but enhances the interaction. In terms of biological role, (Microbial infection) Receptor for C.botulinum neurotoxin type F (BoNT/F); binding requires glycosylation of this protein. In Rattus norvegicus (Rat), this protein is Synaptic vesicle glycoprotein 2B (Sv2b).